Consider the following 417-residue polypeptide: Carboxypeptidase B (417 aa).

Residues 1-15 form the signal peptide; that stretch reads MLALLVLVTVALASA. Residues 16–110 constitute a propeptide, activation peptide; the sequence is HHGGEHFEGE…VEAQFDSRVR (95 aa). The region spanning 118–412 is the Peptidase M14 domain; it reads KYNKWETIEA…LAIKYVASYV (295 aa). Cys-173 and Cys-186 form a disulfide bridge. His-176 and Glu-179 together coordinate Zn(2+). Residues 176–179, Arg-234, and 251–252 each bind substrate; these read HARE and NR. Intrachain disulfides connect Cys-245–Cys-268 and Cys-259–Cys-273. Zn(2+) is bound at residue His-304. Residues 305 to 306 and Tyr-356 contribute to the substrate site; that span reads SY. The active-site Proton donor/acceptor is Glu-378.

This sequence belongs to the peptidase M14 family. Requires Zn(2+) as cofactor. Pancreas.

It localises to the secreted. Its subcellular location is the zymogen granule lumen. The catalysed reaction is Preferential release of a C-terminal lysine or arginine amino acid.. This Homo sapiens (Human) protein is Carboxypeptidase B (CPB1).